A 249-amino-acid chain; its full sequence is 2,3-bisphosphoglycerate-dependent phosphoglycerate mutase (249 aa).

Residues 11–18 (RHGNSEWN), 24–25 (TG), Arg63, 90–93 (ERHY), Lys101, 117–118 (RR), and 185–186 (GN) contribute to the substrate site. His12 acts as the Tele-phosphohistidine intermediate in catalysis. Residue Glu90 is the Proton donor/acceptor of the active site.

Belongs to the phosphoglycerate mutase family. BPG-dependent PGAM subfamily.

The catalysed reaction is (2R)-2-phosphoglycerate = (2R)-3-phosphoglycerate. It functions in the pathway carbohydrate degradation; glycolysis; pyruvate from D-glyceraldehyde 3-phosphate: step 3/5. In terms of biological role, catalyzes the interconversion of 2-phosphoglycerate and 3-phosphoglycerate. This is 2,3-bisphosphoglycerate-dependent phosphoglycerate mutase from Leifsonia xyli subsp. xyli (strain CTCB07).